Consider the following 449-residue polypeptide: Capsid protein (449 aa).

Residues 1-43 are DNA-binding; sequence MARRARRPRGRFYSFRRGRWHHLKRLRRRYKFRHRRRQRYRRR. A nuclear localization signals region spans residues 6–47; sequence RRPRGRFYSFRRGRWHHLKRLRRRYKFRHRRRQRYRRRAFRK.

Belongs to the gyrovirus capsid protein family. As to quaternary structure, homomultimer (Potential). Interacts with Rep; this interaction relocates Rep into the nucleus.

It localises to the host nucleus. It is found in the virion. In terms of biological role, self-assembles to form the virion icosahedral capsid with a T=1 symmetry. This very small capsid (25 nm in diameter) allows the virus to be very stable in the environment and resistant to some disinfectants, including detergents. Essential for the initial attachment to host receptors. After attachment, the virus is endocytosed and traffics to the nucleus. The capsid protein binds and transports the viral genome and Rep across the nuclear envelope. The chain is Capsid protein (VP1) from Gallus gallus (Chicken).